The chain runs to 295 residues: Nucleotide-binding protein llmg_1557 (295 aa).

Position 12–19 (12–19 (GMSGAGKT)) interacts with ATP. Residue 63-66 (DMRS) participates in GTP binding.

It belongs to the RapZ-like family.

Its function is as follows. Displays ATPase and GTPase activities. The protein is Nucleotide-binding protein llmg_1557 of Lactococcus lactis subsp. cremoris (strain MG1363).